Consider the following 370-residue polypeptide: tRNA-specific 2-thiouridylase MnmA (370 aa).

Residues 11–18 and M37 contribute to the ATP site; that span reads GMSGGVDS. Positions 97–99 are interaction with target base in tRNA; it reads NPD. C102 functions as the Nucleophile in the catalytic mechanism. A disulfide bridge links C102 with C199. G126 lines the ATP pocket. An interaction with tRNA region spans residues 149–151; it reads KDQ. C199 acts as the Cysteine persulfide intermediate in catalysis. The segment at 307–308 is interaction with tRNA; that stretch reads RY.

It belongs to the MnmA/TRMU family.

The protein resides in the cytoplasm. It catalyses the reaction S-sulfanyl-L-cysteinyl-[protein] + uridine(34) in tRNA + AH2 + ATP = 2-thiouridine(34) in tRNA + L-cysteinyl-[protein] + A + AMP + diphosphate + H(+). Its function is as follows. Catalyzes the 2-thiolation of uridine at the wobble position (U34) of tRNA, leading to the formation of s(2)U34. The polypeptide is tRNA-specific 2-thiouridylase MnmA (Staphylococcus carnosus (strain TM300)).